The sequence spans 757 residues: Relaxin receptor 1 (757 aa).

Topologically, residues 1–409 (MTSGSVFFYI…ENLLASIIQR (409 aa)) are extracellular. In terms of domain architecture, LDL-receptor class A spans 26-63 (KCSLGYFPCGNITKCLPQLLHCNGVDDCGNQADEDNCG). Intrachain disulfides connect Cys-27-Cys-40, Cys-34-Cys-53, and Cys-47-Cys-62. N-linked (GlcNAc...) asparagine glycosylation is present at Asn-36. Residues Leu-45, Asn-48, Val-50, Asp-52, Asp-58, and Glu-59 each coordinate Ca(2+). The 37-residue stretch at 91–127 (ETPECLVGSVPVQCLCQGLELDCDETNLRAVPSVSSN) folds into the LRRNT domain. N-linked (GlcNAc...) asparagine glycosylation is present at Asn-127. LRR repeat units follow at residues 151 to 172 (DLQK…AFRG), 175 to 196 (SLTK…VFED), 199 to 220 (RLEW…TFYG), 223 to 244 (SLIL…PLCQ), 248 to 269 (RLHW…TFIS), 272 to 293 (NLTV…TFAP), 296 to 317 (KLDE…IFKD), 320 to 341 (ELSQ…QFDY), and 344 to 365 (KLKS…MFRP). N-linked (GlcNAc...) asparagine glycosylation is found at Asn-264 and Asn-272. Asn-325 carries an N-linked (GlcNAc...) asparagine glycan. N-linked (GlcNAc...) asparagine glycosylation occurs at Asn-368. The helical transmembrane segment at 410–430 (VFVWVVSAVTCFGNIFVICMR) threads the bilayer. The Cytoplasmic segment spans residues 431–443 (PYIRSENKLYAMS). The helical transmembrane segment at 444-464 (IISLCCADCLMGIYLFVIGGF) threads the bilayer. Residues 465–486 (DLKFRGEYNKHAQLWMESTHCQ) lie on the Extracellular side of the membrane. An intrachain disulfide couples Cys-485 to Cys-563. Residues 487–507 (LVGSLAILSTEVSVLLLTFLT) form a helical membrane-spanning segment. At 508 to 527 (LEKYICIVYPFRCVRPGKCR) the chain is on the cytoplasmic side. A helical membrane pass occupies residues 528–548 (TITVLILIWITGFIVAFIPLS). Topologically, residues 549–577 (NKEFFKNYYGTNGVCFPLHSEDTESIGAQ) are extracellular. A helical membrane pass occupies residues 578-598 (IYSVAIFLGINLAAFIIIVFS). Residues 599 to 629 (YGSMFYSVHQSAITATEIRNQVKKEMILAKR) lie on the Cytoplasmic side of the membrane. A helical transmembrane segment spans residues 630-650 (FFFIVFTDALCWIPIFVVKFL). Ser-651 is a topological domain (extracellular). A helical transmembrane segment spans residues 652-672 (LLQVEIPGTITSWVVIFILPI). The Cytoplasmic segment spans residues 673-757 (NSALNPILYT…SQSTRLNSYS (85 aa)).

It belongs to the G-protein coupled receptor 1 family. Interacts with C1QTNF8. As to expression, expressed in the brain, kidney, testis, placenta, uterus, ovary, adrenal, prostate, skin and heart. Not detected in spleen.

It is found in the cell membrane. In terms of biological role, receptor for relaxins. The activity of this receptor is mediated by G proteins leading to stimulation of adenylate cyclase and an increase of cAMP. Binding of the ligand may also activate a tyrosine kinase pathway that inhibits the activity of a phosphodiesterase that degrades cAMP. This Homo sapiens (Human) protein is Relaxin receptor 1 (RXFP1).